A 204-amino-acid chain; its full sequence is Pantothenate transporter PanT (204 aa).

6 helical membrane passes run 18–38, 39–59, 63–83, 86–106, 123–143, and 176–196; these read IILLQVLIPWLGYIPLGAVIV, GAQPTIIQFTVAIAAILLGAR, FIGGFWGLLTLWQAWSTPGSI, LMFQNPFTAFIPRILVGLIIG, LGLGFLGGLAALINTVGVVLL, and IFEIITGIILVAAIGNVLVPI.

In E.coli forms a stable energy-coupling factor (ECF) transporter complex probably composed of a membrane-embedded substrate-binding protein (S component), two ATP-binding proteins (A components) and a transmembrane protein (T component).

The protein resides in the cell membrane. In terms of biological role, probable pantothenate-binding protein that interacts with the energy-coupling factor (ECF) ABC-transporter complex. Unlike classic ABC transporters this ECF transporter provides the energy necessary to transport a number of different substrates. The substrates themselves are bound by transmembrane, not extracytoplasmic soluble proteins and transport it into cells. Upon coexpression with its energy-coupling factor (ECF) ABC-transporter complex EcfA1A2T in E.coli allows pantothenate uptake; uptake requires both PanT and EcfA1A2T. This is Pantothenate transporter PanT (panT) from Leuconostoc mesenteroides subsp. mesenteroides (strain ATCC 8293 / DSM 20343 / BCRC 11652 / CCM 1803 / JCM 6124 / NCDO 523 / NBRC 100496 / NCIMB 8023 / NCTC 12954 / NRRL B-1118 / 37Y).